Reading from the N-terminus, the 105-residue chain is Large ribosomal subunit protein uL24 (105 aa).

Belongs to the universal ribosomal protein uL24 family. In terms of assembly, part of the 50S ribosomal subunit.

Its function is as follows. One of two assembly initiator proteins, it binds directly to the 5'-end of the 23S rRNA, where it nucleates assembly of the 50S subunit. Functionally, one of the proteins that surrounds the polypeptide exit tunnel on the outside of the subunit. This is Large ribosomal subunit protein uL24 from Vibrio parahaemolyticus serotype O3:K6 (strain RIMD 2210633).